Here is a 162-residue protein sequence, read N- to C-terminus: MVDSKKNKKQQVTDFSNLLSQSKGFVIFDYSGMSAVDATLMRKKLFNKGSKIKIVKNNILRRALKTSNFEGVDESVIKGKIAVAVGINEILETLKVVDSVVKEKELMKFVCGHFDNRIFNSDDLQKIAKLPGRNELYGMFLSVLQAPLRKFLYALQAVRNAK.

Belongs to the universal ribosomal protein uL10 family. Part of the ribosomal stalk of the 50S ribosomal subunit. The N-terminus interacts with L11 and the large rRNA to form the base of the stalk. The C-terminus forms an elongated spine to which L12 dimers bind in a sequential fashion forming a multimeric L10(L12)X complex.

Functionally, forms part of the ribosomal stalk, playing a central role in the interaction of the ribosome with GTP-bound translation factors. The sequence is that of Large ribosomal subunit protein uL10 (rplJ) from Mycoplasma genitalium (strain ATCC 33530 / DSM 19775 / NCTC 10195 / G37) (Mycoplasmoides genitalium).